The sequence spans 410 residues: MARAKFERSKPHINIGTIGHVDHGKTTLTAAISAVLASIDNTVKLKKFDEIDAAPEEKARGITINTSHVEYQTPLRHYAHVDCPGHADYVKNMITGAAQMDGAILVVSAADGPMPQTREHILLAKQVGVPSIVVFLNKADMIDDEELLELVELEVRELLSKYDFPGEEVPFVAGSALLALEACLKNPTIGKGKDKWVDKIFELMDMVDKYFPTPERDIDKTFLMAVEDVFSITGRGTVATGRIERGAIKVGETVEIVGLKSTASTTVTGLEMFQKTLDEGLAGDNVGVLLRGVQKQDIERGMVLAKPGSITPHDKFEAEVYVLNKEEGGRHTPFFPGYRPQFYVRTTDVTGNISQFTTDDGGSAEMVLPGDRIKMTVELIHPVAIEQGMRFAIREGGRTVGAGIVSKILD.

Residues 10–215 form the tr-type G domain; sequence KPHINIGTIG…MVDKYFPTPE (206 aa). The tract at residues 19–26 is G1; the sequence is GHVDHGKT. GTP is bound at residue 19–26; that stretch reads GHVDHGKT. Mg(2+) is bound at residue T26. Positions 61-65 are G2; sequence GITIN. The interval 82–85 is G3; it reads DCPG. GTP contacts are provided by residues 82-86 and 137-140; these read DCPGH and NKAD. The tract at residues 137–140 is G4; sequence NKAD. Positions 175-177 are G5; it reads SAL.

The protein belongs to the TRAFAC class translation factor GTPase superfamily. Classic translation factor GTPase family. EF-Tu/EF-1A subfamily.

It localises to the plastid. It is found in the chloroplast. It catalyses the reaction GTP + H2O = GDP + phosphate + H(+). Functionally, GTP hydrolase that promotes the GTP-dependent binding of aminoacyl-tRNA to the A-site of ribosomes during protein biosynthesis. The polypeptide is Elongation factor Tu, chloroplastic (tufA) (Cyanidium caldarium (Red alga)).